We begin with the raw amino-acid sequence, 543 residues long: MQTMSSGIARPVLFLTAREGEYVLKDEFQLGSSSRSTPQITGSPLDPNTPVKRLFFMRINIAQFSRWDYPYPREYIEELKKIHGVHHVEENRDVPSILENYRNSKRKSHNFSSSNTPYLKLHRPASRAGAPLINAKSFISSLTFHDNIVRSFQPSIHGKTFVFANHEKSFYWLDVSAANSHSALLKMEFPRASPVCHDINSFTKSPKGLDVIIGFDTGDVLWYDPINFKYLRFNKNGQLNSSSVTAIKWVAGKDSQFLVSFRNGWLVLYDKYRHEQPLHIVVPEKNLKSLYLSSPGTFNILISINHRDDRKLNPVACYAFSKSPINGFCFSPDYQYLALVSERGTLKLFDFVKEHVLDVFHSYFAGLTCVTWSPDGKFIAIGGKDDLVSIYSFPLRKLVARCQGHKSWVTDVIFDAWRCDDDNYRIASVGLDRKLLLWDFSVSAIHRPKSAVYYVNHHSNNSKPAISDFDDVGDLTMGSEIDNSNYVNGDITIHPTLSRSLIPVISPITIYDVDDSPLSSVFFDPDCMITCATNGRIRTWQRP.

A Phosphoserine modification is found at Ser43. WD repeat units follow at residues 239–279 (LNSS…QPLH), 320–361 (FSKS…DVFH), 362–401 (SYFA…LVAR), 404–448 (GHKS…IHRP), and 513–542 (VDDS…TWQR).

As to quaternary structure, interacts with ubp9 and bun107.

It localises to the nucleus. The protein localises to the cytoplasm. Its subcellular location is the cell tip. Functionally, required for the ubp9 recruitment to septa and cell tips but also for its enzymatic activity at these specific locations. The sequence is that of UBP9-binding protein bun62 (bun62) from Schizosaccharomyces pombe (strain 972 / ATCC 24843) (Fission yeast).